We begin with the raw amino-acid sequence, 99 residues long: uncharacterized protein (99 aa).

3 helical membrane passes run 7-29 (FFISYFLPLISFLGLLNLLYTLY), 39-61 (FISSSVVSIFTILFGTMPYARYN), and 68-90 (FCNLMVFVLPVSFFLVSLLLWLL).

Its subcellular location is the cell membrane. This is an uncharacterized protein from Archaeoglobus fulgidus (strain ATCC 49558 / DSM 4304 / JCM 9628 / NBRC 100126 / VC-16).